A 594-amino-acid polypeptide reads, in one-letter code: TOX high mobility group box family member 4-B (594 aa).

2 disordered regions span residues 160–225 (GTIL…PQKP) and 522–545 (ESPPPQMDVELVSSSPPPSLSPQC). The span at 207-217 (KPKTPKKKKKK) shows a compositional bias: basic residues. Residues 212 to 217 (KKKKKK) carry the Nuclear localization signal motif. The HMG box DNA-binding region spans 222 to 290 (PQKPLSAYAL…EYLKALALYK (69 aa)).

Component of the PNUTS-PP1 phosphatase complex.

Its subcellular location is the nucleus. The protein resides in the chromosome. In terms of biological role, transcription factor that modulates cell fate reprogramming from the somatic state to the pluripotent and neuronal fate. Also acts as a regulatory component of protein phosphatase 1 (PP1) complexes. Component of the PNUTS-PP1 protein phosphatase complex, a PP1 complex that regulates RNA polymerase II transcription pause-release. PNUTS-PP1 also plays a role in the control of chromatin structure and cell cycle progression during the transition from mitosis into interphase. The chain is TOX high mobility group box family member 4-B (tox4-b) from Xenopus laevis (African clawed frog).